Here is a 128-residue protein sequence, read N- to C-terminus: Large ribosomal subunit protein uL22 (128 aa).

It belongs to the universal ribosomal protein uL22 family. In terms of assembly, part of the 50S ribosomal subunit.

Functionally, this protein binds specifically to 23S rRNA; its binding is stimulated by other ribosomal proteins, e.g. L4, L17, and L20. It is important during the early stages of 50S assembly. It makes multiple contacts with different domains of the 23S rRNA in the assembled 50S subunit and ribosome. Its function is as follows. The globular domain of the protein is located near the polypeptide exit tunnel on the outside of the subunit, while an extended beta-hairpin is found that lines the wall of the exit tunnel in the center of the 70S ribosome. The sequence is that of Large ribosomal subunit protein uL22 from Nitrobacter winogradskyi (strain ATCC 25391 / DSM 10237 / CIP 104748 / NCIMB 11846 / Nb-255).